The chain runs to 178 residues: Cytochrome b6-f complex iron-sulfur subunit (178 aa).

A helical transmembrane segment spans residues 20-42 (LLTFGTATGVALGALYPVANYFM). Residues 65–161 (KTGWLATHQA…VDIEDDAVLV (97 aa)) form the Rieske domain. Positions 107, 109, 125, and 128 each coordinate [2Fe-2S] cluster. A disulfide bridge connects residues Cys-112 and Cys-127.

This sequence belongs to the Rieske iron-sulfur protein family. In terms of assembly, the 4 large subunits of the cytochrome b6-f complex are cytochrome b6, subunit IV (17 kDa polypeptide, PetD), cytochrome f and the Rieske protein, while the 4 small subunits are PetG, PetL, PetM and PetN. The complex functions as a dimer. [2Fe-2S] cluster is required as a cofactor.

The protein resides in the cellular thylakoid membrane. It catalyses the reaction 2 oxidized [plastocyanin] + a plastoquinol + 2 H(+)(in) = 2 reduced [plastocyanin] + a plastoquinone + 4 H(+)(out). In terms of biological role, component of the cytochrome b6-f complex, which mediates electron transfer between photosystem II (PSII) and photosystem I (PSI), cyclic electron flow around PSI, and state transitions. The chain is Cytochrome b6-f complex iron-sulfur subunit from Prochlorococcus marinus (strain MIT 9301).